Consider the following 254-residue polypeptide: 4-hydroxy-tetrahydrodipicolinate reductase (254 aa).

NAD(+)-binding positions include 8–13 (GCSGKM), Asp-35, 86–88 (CST), and 110–113 (SANM). His-143 functions as the Proton donor/acceptor in the catalytic mechanism. His-144 is a binding site for (S)-2,3,4,5-tetrahydrodipicolinate. Lys-147 functions as the Proton donor in the catalytic mechanism. Residue 153–154 (GT) coordinates (S)-2,3,4,5-tetrahydrodipicolinate.

This sequence belongs to the DapB family.

Its subcellular location is the cytoplasm. It catalyses the reaction (S)-2,3,4,5-tetrahydrodipicolinate + NAD(+) + H2O = (2S,4S)-4-hydroxy-2,3,4,5-tetrahydrodipicolinate + NADH + H(+). It carries out the reaction (S)-2,3,4,5-tetrahydrodipicolinate + NADP(+) + H2O = (2S,4S)-4-hydroxy-2,3,4,5-tetrahydrodipicolinate + NADPH + H(+). The protein operates within amino-acid biosynthesis; L-lysine biosynthesis via DAP pathway; (S)-tetrahydrodipicolinate from L-aspartate: step 4/4. Functionally, catalyzes the conversion of 4-hydroxy-tetrahydrodipicolinate (HTPA) to tetrahydrodipicolinate. The polypeptide is 4-hydroxy-tetrahydrodipicolinate reductase (Clostridium perfringens (strain 13 / Type A)).